The chain runs to 236 residues: V-set and transmembrane domain-containing protein 1 (236 aa).

Residues 1 to 16 (MTAEFLSLLCLGLCLG) form the signal peptide. The Extracellular segment spans residues 17–135 (YEDEKKNEKP…APSMKTDTRT (119 aa)). Residues 27 to 114 (PKPSLHAWPS…EWSESSEHLQ (88 aa)) enclose the Ig-like V-type domain. N-linked (GlcNAc...) asparagine glycosylation is found at asparagine 44 and asparagine 55. Cysteine 49 and cysteine 96 are joined by a disulfide. The chain crosses the membrane as a helical span at residues 136-156 (IFVAIFSCISILLLFLSVFII). At 157-236 (YRCSQHSSSS…GSHEYAALKV (80 aa)) the chain is on the cytoplasmic side. A disordered region spans residues 166–200 (SEESTKRTSHSKLPEQEAAEADLSNMERVSLSTAD). 2 consecutive short sequence motifs (ITIM motif) follow at residues 204–209 (VTYAEL) and 229–234 (HEYAAL). The segment at 215–236 (SEAASDTTQEPPGSHEYAALKV) is disordered.

Post-translationally, isoform 2 is N-glycosylated. In terms of tissue distribution, expressed on myeloid (neutrophils, eosinophils and monocytes) but not on lymphoid cells.

The protein localises to the membrane. It localises to the secreted. Functionally, behaves as a cytokine, promoting IL17A secretion by CD4+ T-cells, and differentiation and activation of IL17 producing helper T-cells (TH17). Its function is as follows. Inhibitory immune receptor involved in the regulation of phagocytes. The chain is V-set and transmembrane domain-containing protein 1 (VSTM1) from Homo sapiens (Human).